Reading from the N-terminus, the 347-residue chain is NADH-ubiquinone oxidoreductase chain 2 (347 aa).

10 helical membrane-spanning segments follow: residues 4 to 21 (LALI…VIVM), 26 to 44 (WLLV…IPVL), 59 to 79 (YFLT…TNLL), 93 to 115 (LAST…HFWV), 149 to 169 (LNLN…GWGG), 178 to 198 (ILAY…TYNP), 200 to 220 (LTLL…MLFM), 241 to 261 (ATSV…SGFL), 274 to 294 (ESIF…YFYM), and 323 to 343 (TPLL…APIL).

This sequence belongs to the complex I subunit 2 family. In terms of assembly, core subunit of respiratory chain NADH dehydrogenase (Complex I) which is composed of 45 different subunits. Interacts with TMEM242.

The protein resides in the mitochondrion inner membrane. It catalyses the reaction a ubiquinone + NADH + 5 H(+)(in) = a ubiquinol + NAD(+) + 4 H(+)(out). Functionally, core subunit of the mitochondrial membrane respiratory chain NADH dehydrogenase (Complex I) which catalyzes electron transfer from NADH through the respiratory chain, using ubiquinone as an electron acceptor. Essential for the catalytic activity and assembly of complex I. This chain is NADH-ubiquinone oxidoreductase chain 2, found in Cardioderma cor (Heart-nosed bat).